The following is a 33-amino-acid chain: Cytochrome b6-f complex subunit 8 (33 aa).

The helical transmembrane segment at 2–22 (LFTLAWASLAAVFSFSIAMVV) threads the bilayer.

The protein belongs to the PetN family. The 4 large subunits of the cytochrome b6-f complex are cytochrome b6, subunit IV (17 kDa polypeptide, PetD), cytochrome f and the Rieske protein, while the 4 small subunits are PetG, PetL, PetM and PetN. The complex functions as a dimer.

It is found in the cellular thylakoid membrane. In terms of biological role, component of the cytochrome b6-f complex, which mediates electron transfer between photosystem II (PSII) and photosystem I (PSI), cyclic electron flow around PSI, and state transitions. The polypeptide is Cytochrome b6-f complex subunit 8 (Prochlorococcus marinus (strain MIT 9303)).